Here is a 1254-residue protein sequence, read N- to C-terminus: Structural polyprotein (1254 aa).

The interval 1–33 is necessary for nucleocapsid assembly and virus assembly; it reads MFPFQPMYPMQPMPYRNPFAAPRRPWFPRTDPF. The segment at 33-68 is host transcription inhibition; the sequence is FLAMQVQELTRSMANLTFKQRRDAPPEGPSAKKPKK. The Supraphysiological nuclear export signal motif lies at 41–48; that stretch reads LTRSMANL. Positions 45–119 are disordered; it reads MANLTFKQRR…KKPGKRQRMV (75 aa). The Nuclear localization signal signature appears at 64–68; sequence KKPKK. Positions 80-92 are enriched in basic residues; sequence GKKKKNQGKKKAK. The interval 91-127 is binding to the viral RNA; it reads AKTGPPNPKAQNGNKKKTNKKPGKRQRMVMKLESDKT. 2 positions are modified to phosphothreonine: threonine 93 and threonine 108. The span at 104–118 shows a compositional bias: basic residues; the sequence is NKKKTNKKPGKRQRM. The ribosome-binding stretch occupies residues 112 to 126; it reads PGKRQRMVMKLESDK. Serine 124 carries the post-translational modification Phosphoserine. One can recognise a Peptidase S3 domain in the interval 126 to 275; the sequence is KTFPIMLEGK…KYTPENCEQW (150 aa). A Phosphothreonine modification is found at threonine 127. Residues histidine 152, aspartate 174, and serine 226 each act as charge relay system in the active site. The segment at 276-287 is functions as an uncleaved signal peptide for the precursor of protein E3/E2; it reads SLVTTMCLLANV. At 276–701 the chain is on the extracellular side; sequence SLVTTMCLLA…HYYHRYPMST (426 aa). 3 N-linked (GlcNAc...) asparagine; by host glycosylation sites follow: asparagine 286, asparagine 546, and asparagine 652. Residues 702-722 form a helical membrane-spanning segment; it reads ILGLSICAAIATVSVAASTWL. Residues 723 to 757 lie on the Cytoplasmic side of the membrane; it reads FCRSRVACLTPYRLTPNARIPFCLAVLCCARTARA. S-palmitoyl cysteine; by host attachment occurs at residues cysteine 730, cysteine 750, and cysteine 751. The segment at 730–750 is transient transmembrane before p62-6K protein processing; the sequence is CLTPYRLTPNARIPFCLAVLC. Over 758–772 the chain is Extracellular; that stretch reads ETTWESLDHLWNNNQ. Residues 773 to 793 form a helical membrane-spanning segment; sequence QMFWIQLLIPLAALIVVTRLL. At 794-795 the chain is on the cytoplasmic side; it reads RC. A helical membrane pass occupies residues 796 to 816; it reads VCCVVPFLVMAGAAAGAYEHA. At 817–1224 the chain is on the extracellular side; sequence TTMPSQAGIS…SKTAWTWLTS (408 aa). Intrachain disulfides connect cysteine 861/cysteine 926, cysteine 874/cysteine 906, cysteine 875/cysteine 908, and cysteine 880/cysteine 890. The tract at residues 896 to 913 is E1 fusion peptide loop; it reads VYPFMWGGAYCFCDTENT. Asparagine 946 is a glycosylation site (N-linked (GlcNAc...) asparagine; by host). 4 disulfide bridges follow: cysteine 1071–cysteine 1083, cysteine 1113–cysteine 1188, cysteine 1118–cysteine 1192, and cysteine 1140–cysteine 1182. Residues 1225 to 1245 form a helical membrane-spanning segment; that stretch reads LLGGSAVIIIIGLVLATIVAM. Residues 1246–1254 lie on the Cytoplasmic side of the membrane; the sequence is YVLTNQKHN.

As to quaternary structure, homodimer. Homomultimer. Interacts with host karyopherin KPNA4; this interaction allows the nuclear import of the viral capsid protein. Interacts with spike glycoprotein E2. Interacts with host IRAK1; the interaction leads to inhibition of IRAK1-dependent signaling. Part of a tetrameric complex composed of host CRM1, host importin alpha/beta dimer and the viral capsid; this complex blocks the receptor-mediated transport through the nuclear pore. Interacts with host phosphatase PPP1CA; this interaction dephosphorylates the capsid protein, which increases its ability to bind to the viral genome. In terms of assembly, the precursor of protein E3/E2 and E1 form a heterodimer shortly after synthesis. Interacts with spike glycoprotein E2. The precursor of protein E3/E2 and E1 form a heterodimer shortly after synthesis. Processing of the precursor of protein E3/E2 into E2 and E3 results in a heterodimer of the spike glycoproteins E2 and E1. Spike at virion surface are constituted of three E2-E1 heterodimers. After target cell attachment and endocytosis, E1 change conformation to form homotrimers. Interacts with 6K protein. Interacts with host LDLRAD3; this interaction mediates viral entry to the host cell. As to quaternary structure, interacts with spike glycoprotein E1. Processing of the precursor of protein E3/E2 into E2 and E3 results in a heterodimer of the spike glycoproteins E2 and E1. Spike at virion surface are constituted of a trimer of E2-E1 heterodimers. Interacts with 6K protein. Interacts with host LDLRAD3; this interaction mediates viral entry to the host cell. In terms of assembly, oligomer. Interacts with spike glycoprotein E1. Interacts with spike glycoprotein E2. Structural polyprotein: Specific enzymatic cleavages in vivo yield mature proteins. Capsid protein is auto-cleaved during polyprotein translation, unmasking a signal peptide at the N-terminus of the precursor of E3/E2. The remaining polyprotein is then targeted to the host endoplasmic reticulum, where host signal peptidase cleaves it into pE2, 6K and E1 proteins. pE2 is further processed to mature E3 and E2 by host furin in trans-Golgi vesicle. Post-translationally, palmitoylated via thioester bonds. These palmitoylations may induce disruption of the C-terminus transmembrane. This would result in the reorientation of E2 C-terminus from lumenal to cytoplasmic side. In terms of processing, phosphorylated on serine and threonine residues. N-glycosylated. Post-translationally, palmitoylated via thioester bonds.

The protein resides in the virion. It is found in the host cytoplasm. Its subcellular location is the host cell membrane. The protein localises to the host nucleus. It localises to the virion membrane. The enzyme catalyses Autocatalytic release of the core protein from the N-terminus of the togavirus structural polyprotein by hydrolysis of a -Trp-|-Ser- bond.. Forms an icosahedral capsid with a T=4 symmetry composed of 240 copies of the capsid protein surrounded by a lipid membrane through which penetrate 80 spikes composed of trimers of E1-E2 heterodimers. The capsid protein binds to the viral RNA genome at a site adjacent to a ribosome binding site for viral genome translation following genome release. Possesses a protease activity that results in its autocatalytic cleavage from the nascent structural protein. Following its self-cleavage, the capsid protein transiently associates with ribosomes, and within several minutes the protein binds to viral RNA and rapidly assembles into icosahedric core particles. The resulting nucleocapsid eventually associates with the cytoplasmic domain of the spike glycoprotein E2 at the cell membrane, leading to budding and formation of mature virions. In case of infection, new virions attach to target cells and after clathrin-mediated endocytosis their membrane fuses with the host endosomal membrane. This leads to the release of the nucleocapsid into the cytoplasm, followed by an uncoating event necessary for the genomic RNA to become accessible. The uncoating might be triggered by the interaction of capsid proteins with ribosomes. Binding of ribosomes would release the genomic RNA since the same region is genomic RNA-binding and ribosome-binding. Specifically inhibits interleukin-1 receptor-associated kinase 1/IRAK1-dependent signaling during viral entry, representing a means by which the alphaviruses may evade innate immune detection and activation prior to viral gene expression. Inhibits host transcription. Forms a tetrameric complex with XPO1/CRM1 and the nuclear import receptor importin. This complex blocks the central channel of host nuclear pores thereby inhibiting the receptor-mediated nuclear transport and thus the host mRNA and rRNA transcription. The inhibition of transcription is linked to a cytopathic effect on the host cell. Its function is as follows. Provides the signal sequence for the translocation of the precursor of protein E3/E2 to the host endoplasmic reticulum. Furin-cleaved E3 remains associated with spike glycoprotein E1 and mediates pH protection of the latter during the transport via the secretory pathway. After virion release from the host cell, the assembly protein E3 is gradually released in the extracellular space. Functionally, plays a role in viral attachment to target host cell, by binding to the cell receptor LDLRAD3. Synthesized as a p62 precursor which is processed by furin at the cell membrane just before virion budding, giving rise to E2-E1 heterodimer. The p62-E1 heterodimer is stable, whereas E2-E1 is unstable and dissociate at low pH. p62 is processed at the last step, presumably to avoid E1 fusion activation before its final export to cell surface. E2 C-terminus contains a transitory transmembrane that would be disrupted by palmitoylation, resulting in reorientation of the C-terminal tail from lumenal to cytoplasmic side. This step is critical since E2 C-terminus is involved in budding by interacting with capsid proteins. This release of E2 C-terminus in cytoplasm occurs lately in protein export, and precludes premature assembly of particles at the endoplasmic reticulum membrane. In terms of biological role, acts as a viroporin that participates in virus glycoprotein processing and transport to the plasma membrane, cell permeabilization and budding of viral particles. Disrupts the calcium homeostasis of the cell, probably at the endoplasmic reticulum level. This leads to cytoplasmic calcium elevation. Because of its lipophilic properties, the 6K protein is postulated to influence the selection of lipids that interact with the transmembrane domains of the glycoproteins, which, in turn, affects the deformability of the bilayer required for the extreme curvature that occurs as budding proceeds. Present in low amount in virions, about 3% compared to viral glycoproteins. Class II viral fusion protein. Fusion activity is inactive as long as E1 is bound to E2 in mature virion. After virus attachment to cell receptor LDLRAD3 and endocytosis, acidification of the endosome would induce dissociation of E1/E2 heterodimer and concomitant trimerization of the E1 subunits. This E1 trimer is fusion active, and promotes release of viral nucleocapsid in cytoplasm after endosome and viral membrane fusion. Efficient fusion requires the presence of cholesterol and sphingolipid in the target membrane. Fusion is optimal at levels of about 1 molecule of cholesterol per 2 molecules of phospholipids, and is specific for sterols containing a 3-beta-hydroxyl group. The protein is Structural polyprotein of Bos taurus (Bovine).